We begin with the raw amino-acid sequence, 556 residues long: Membrane protein insertase YidC (556 aa).

A helical membrane pass occupies residues 7-27; sequence ILLVALAVVAYLMVLQWNQDY. Disordered stretches follow at residues 35 to 59 and 126 to 152; these read ETAQSQPAAPALPDSPSATTEGNAN and SSERTYEAQSGLIGDGPDKASGRPQYS. The segment covering 36 to 54 has biased composition (low complexity); that stretch reads TAQSQPAAPALPDSPSATT. 4 consecutive transmembrane segments (helical) span residues 365–385, 435–455, 468–488, and 513–533; these read LLGNWGWSIIVLTIVIKLAFF, LGGCLPILVQMPVFLALYWVL, FWITDLSIKDPYFILPIIMGV, and PIIFTFFFLWFPAGLVLYWVV.

The protein belongs to the OXA1/ALB3/YidC family. Type 1 subfamily. Interacts with the Sec translocase complex via SecD. Specifically interacts with transmembrane segments of nascent integral membrane proteins during membrane integration.

It is found in the cell inner membrane. Its function is as follows. Required for the insertion and/or proper folding and/or complex formation of integral membrane proteins into the membrane. Involved in integration of membrane proteins that insert both dependently and independently of the Sec translocase complex, as well as at least some lipoproteins. Aids folding of multispanning membrane proteins. The chain is Membrane protein insertase YidC from Stutzerimonas stutzeri (strain A1501) (Pseudomonas stutzeri).